The sequence spans 945 residues: Xylanolytic transcriptional activator xlnR (945 aa).

Low complexity predominate over residues 1–23 (MSTPSIPQFTSSFSPFSSGSHST). Disordered regions lie at residues 1 to 32 (MSTPSIPQFTSSFSPFSSGSHSTGMAPSQTVG) and 53 to 118 (AAGT…APVR). Basic and acidic residues predominate over residues 73-84 (HTKDQPPFDNEK). Residues 125–151 (CDQCNQLRTKCDGQHPCAHCIEFGLTC) constitute a DNA-binding region (zn(2)-C6 fungal-type). Disordered stretches follow at residues 172 to 210 (AAAATQGSNGHSGQANASLMGERTSEDSRPGQDVNGTYD) and 559 to 601 (PPNV…INVT). The span at 176–188 (TQGSNGHSGQANA) shows a compositional bias: polar residues. A compositionally biased stretch (basic and acidic residues) spans 565–581 (ARQDGERDGDGEADKRH).

It belongs to the xlnR/xlr1 family.

It is found in the nucleus. Its function is as follows. Transcriptional activator of the xylanolytic system. Involved in the regulation of extracellular cellulolytic and xylanolytic genes and in the regulation of the intracellular activities of D-xylose catabolic genes in the pentose catabolic pathway (PCP) in response to the presence of D-xylose. Binds to the DNA sequence 5'-GGNTAAA-3'. The chain is Xylanolytic transcriptional activator xlnR (xlnR) from Aspergillus niger.